We begin with the raw amino-acid sequence, 360 residues long: MPKHRKQSKIKIYRITNYKKDKRSELDSNKFELEQQAVENKQDKQGKQDNQVQSENVVIVPTDSHNLDIWDEISLKEIQAGEHTNLFAEQSNYQNINLLQVSDIRLYLDKQLQFSSVDEQIYHEALVHPIMSKVIDPKRVLILGGGDGLALREVLKYETVLHVDLVDLDGSMIDMARNVPELVSLNKSAFFDNRVNTHVCDAKEFLSSPSSLYDVIIIDFPDPATELLSTLYTSELFARIATFLTEDGAFVCQSNSPADAPLVYWSIGNTIEHAGLTVKSYHTIVPSFGTDWGFHIAANSVYVLDQIEQLYVVPTPRTLPSLLFPLFQFKEEHLEQRNFALLNSESNLILHQCYKKEMEF.

The PABS domain maps to 68–299 (DIWDEISLKE…TDWGFHIAAN (232 aa)). Q94 serves as a coordination point for S-methyl-5'-thioadenosine. 2 residues coordinate spermidine: H123 and D147. Residues D167 and 201-202 (DA) contribute to the S-methyl-5'-thioadenosine site. D219 serves as the catalytic Proton acceptor.

It belongs to the spermidine/spermine synthase family. Homodimer or homotetramer.

The protein localises to the cytoplasm. It catalyses the reaction S-adenosyl 3-(methylsulfanyl)propylamine + putrescine = S-methyl-5'-thioadenosine + spermidine + H(+). It functions in the pathway amine and polyamine biosynthesis; spermidine biosynthesis; spermidine from putrescine: step 1/1. In terms of biological role, catalyzes the irreversible transfer of a propylamine group from the amino donor S-adenosylmethioninamine (decarboxy-AdoMet) to putrescine (1,4-diaminobutane) to yield spermidine. The polypeptide is Polyamine aminopropyltransferase 2 (Bacillus anthracis).